Reading from the N-terminus, the 144-residue chain is Nucleoside diphosphate kinase (144 aa).

Residues lysine 11, phenylalanine 59, arginine 87, threonine 93, arginine 104, and asparagine 114 each coordinate ATP. Residue histidine 117 is the Pros-phosphohistidine intermediate of the active site.

It belongs to the NDK family. As to quaternary structure, homotetramer. It depends on Mg(2+) as a cofactor.

The protein resides in the cytoplasm. It carries out the reaction a 2'-deoxyribonucleoside 5'-diphosphate + ATP = a 2'-deoxyribonucleoside 5'-triphosphate + ADP. It catalyses the reaction a ribonucleoside 5'-diphosphate + ATP = a ribonucleoside 5'-triphosphate + ADP. Functionally, major role in the synthesis of nucleoside triphosphates other than ATP. The ATP gamma phosphate is transferred to the NDP beta phosphate via a ping-pong mechanism, using a phosphorylated active-site intermediate. This Vibrio atlanticus (strain LGP32) (Vibrio splendidus (strain Mel32)) protein is Nucleoside diphosphate kinase.